A 190-amino-acid chain; its full sequence is Isopentenyl-diphosphate Delta-isomerase (190 aa).

The Mn(2+) site is built by His27 and His34. The Nudix hydrolase domain maps to 32 to 166; that stretch reads ALHLAFSCHV…PWAFSPWLTL (135 aa). Cys69 is an active-site residue. His71 serves as a coordination point for Mn(2+). Mg(2+) is bound at residue Glu89. 2 residues coordinate Mn(2+): Glu116 and Glu118. Glu118 is a catalytic residue.

The protein belongs to the IPP isomerase type 1 family. Mg(2+) is required as a cofactor. Requires Mn(2+) as cofactor.

The protein localises to the cytoplasm. It catalyses the reaction isopentenyl diphosphate = dimethylallyl diphosphate. Its pathway is isoprenoid biosynthesis; dimethylallyl diphosphate biosynthesis; dimethylallyl diphosphate from isopentenyl diphosphate: step 1/1. Catalyzes the 1,3-allylic rearrangement of the homoallylic substrate isopentenyl (IPP) to its highly electrophilic allylic isomer, dimethylallyl diphosphate (DMAPP). The protein is Isopentenyl-diphosphate Delta-isomerase of Clavibacter sepedonicus (Clavibacter michiganensis subsp. sepedonicus).